A 364-amino-acid polypeptide reads, in one-letter code: Glutamine synthetase (364 aa).

The 80-residue stretch at 15–94 (VLAEYIWIDA…VLAECWNNDG (80 aa)) folds into the GS beta-grasp domain. In terms of domain architecture, GS catalytic spans 101-364 (HRHECAKLMS…ETKRGEEEGF (264 aa)).

The protein belongs to the glutamine synthetase family. As to quaternary structure, homooctamer.

It is found in the cytoplasm. The enzyme catalyses L-glutamate + NH4(+) + ATP = L-glutamine + ADP + phosphate + H(+). This is Glutamine synthetase (GLN1) from Yarrowia lipolytica (strain CLIB 122 / E 150) (Yeast).